The primary structure comprises 488 residues: TOX high mobility group box family member 2 (488 aa).

The interval 76-114 (YEIPPITPPNLPEPSLLHLGDHEASYHSLCHGLTPNGLL) is required for transcriptional activation. Disordered stretches follow at residues 192–258 (RSSI…PQKP), 293–328 (WDSL…KQPM), and 363–473 (SLLP…ECGI). Residues 204–216 (GSKSATPSPSSST) are compositionally biased toward low complexity. Basic and acidic residues predominate over residues 222-239 (EVHFKISGEKRPSADPGK). The Nuclear localization signal signature appears at 223–252 (VHFKISGEKRPSADPGKKAKNPKKKKKKDP). The span at 240–250 (KAKNPKKKKKK) shows a compositional bias: basic residues. The segment at residues 255–323 (PQKPVSAYAL…QANPPAKMLP (69 aa)) is a DNA-binding region (HMG box). Polar residues predominate over residues 302 to 316 (QSSPDQGETKSTQAN). Positions 443–460 (PSSSGSCSPGPSNPTSSG) are enriched in low complexity.

The protein resides in the nucleus. Putative transcriptional activator involved in the hypothalamo-pituitary-gonadal system. This Homo sapiens (Human) protein is TOX high mobility group box family member 2 (TOX2).